A 227-amino-acid chain; its full sequence is Nucleoside triphosphate pyrophosphatase (227 aa).

The Proton acceptor role is filled by D77.

It belongs to the Maf family. Requires a divalent metal cation as cofactor.

Its subcellular location is the cytoplasm. It catalyses the reaction a ribonucleoside 5'-triphosphate + H2O = a ribonucleoside 5'-phosphate + diphosphate + H(+). The enzyme catalyses a 2'-deoxyribonucleoside 5'-triphosphate + H2O = a 2'-deoxyribonucleoside 5'-phosphate + diphosphate + H(+). Functionally, nucleoside triphosphate pyrophosphatase. May have a dual role in cell division arrest and in preventing the incorporation of modified nucleotides into cellular nucleic acids. This is Nucleoside triphosphate pyrophosphatase from Rickettsia typhi (strain ATCC VR-144 / Wilmington).